The sequence spans 390 residues: Homoserine O-succinyltransferase (390 aa).

One can recognise an AB hydrolase-1 domain in the interval 59–369 (NAVLVCHALN…PHGHDAFLLD (311 aa)). Ser-165 serves as the catalytic Nucleophile. Arg-235 contacts substrate. Residues Asp-330 and His-363 contribute to the active site. Residue Asp-364 coordinates substrate.

The protein belongs to the AB hydrolase superfamily. MetX family. Homodimer.

The protein resides in the cytoplasm. It catalyses the reaction L-homoserine + succinyl-CoA = O-succinyl-L-homoserine + CoA. The protein operates within amino-acid biosynthesis; L-methionine biosynthesis via de novo pathway; O-succinyl-L-homoserine from L-homoserine: step 1/1. Functionally, transfers a succinyl group from succinyl-CoA to L-homoserine, forming succinyl-L-homoserine. The sequence is that of Homoserine O-succinyltransferase from Cupriavidus metallidurans (strain ATCC 43123 / DSM 2839 / NBRC 102507 / CH34) (Ralstonia metallidurans).